The chain runs to 804 residues: Tubulin polyglutamylase TTLL13 (804 aa).

The tract at residues 1–41 is disordered; it reads MEPNNCKTSESEEDDIEEEESEEECVREESTTPNSTQQALR. The stretch at 4-30 forms a coiled coil; sequence NNCKTSESEEDDIEEEESEEECVREES. Positions 11 to 26 are enriched in acidic residues; it reads SEEDDIEEEESEEECV. The TTL domain maps to 85–430; it reads RRPLAINLTN…RGCDKKKVIE (346 aa). Residues lysine 202, 208 to 209, 230 to 233, and 243 to 245 contribute to the ATP site; these read QG, QQYI, and KFD. Glutamine 208 provides a ligand contact to a protein. Arginine 269 contributes to the L-glutamate binding site. Position 291-292 (291-292) interacts with ATP; sequence TN. L-glutamate is bound by residues tyrosine 293 and lysine 311. Positions 376, 389, and 391 each coordinate Mg(2+). Residue histidine 392 coordinates a protein. The c-MTBD region stretch occupies residues 401–482; the sequence is RLDREVKDAL…LGGYRRIYPG (82 aa). Lysine 407 provides a ligand contact to L-glutamate. Coiled-coil stretches lie at residues 504–541 and 585–609; these read ASKA…KEQN and QDIV…IRSL. Residues 519–556 are disordered; sequence IRLKQEQQENPGTKKRKENKEQNQGESAGEKSRSRTAT. Basic and acidic residues predominate over residues 536–551; sequence ENKEQNQGESAGEKSR.

It belongs to the tubulin--tyrosine ligase family. Requires Mg(2+) as cofactor. As to expression, highly expressed in heart and testis. Expressed in brain, kidney, liver, lung, muscle and trachea. In the brain, expressed in ependymal cilia, cortex, corpus callosum and striatum.

It carries out the reaction (L-glutamyl)(n)-gamma-L-glutamyl-L-glutamyl-[protein] + L-glutamate + ATP = (L-glutamyl)(n+1)-gamma-L-glutamyl-L-glutamyl-[protein] + ADP + phosphate + H(+). Its function is as follows. Polyglutamylase which modifies tubulin, generating polyglutamate side chains of variable lengths on the gamma-carboxyl group of specific glutamate residues within the C-terminal tail of tubulin. Mediates ATP-dependent polyglutamate side-chain elongation of the polyglutamylation reaction but not the initiation step. Preferentially modifies the alpha-tubulin tail over a beta-tail. The polypeptide is Tubulin polyglutamylase TTLL13 (Mus musculus (Mouse)).